The sequence spans 440 residues: Xylose isomerase (440 aa).

Residues His-100 and Asp-103 contribute to the active site. Positions 231, 267, 270, 295, 306, 308, and 338 each coordinate Mg(2+).

Belongs to the xylose isomerase family. As to quaternary structure, homotetramer. Requires Mg(2+) as cofactor.

It is found in the cytoplasm. It carries out the reaction alpha-D-xylose = alpha-D-xylulofuranose. This Burkholderia orbicola (strain MC0-3) protein is Xylose isomerase.